The chain runs to 421 residues: Tyrosine--tRNA ligase (421 aa).

L-tyrosine is bound at residue Tyr35. Positions 40 to 49 (PTADSLHIGH) match the 'HIGH' region motif. L-tyrosine is bound by residues Tyr170 and Gln174. The 'KMSKS' region signature appears at 232–236 (KFGKT). Position 235 (Lys235) interacts with ATP. The region spanning 355 to 421 (LSLVDVLVES…GKKKYFLITY (67 aa)) is the S4 RNA-binding domain.

This sequence belongs to the class-I aminoacyl-tRNA synthetase family. TyrS type 1 subfamily. As to quaternary structure, homodimer.

Its subcellular location is the cytoplasm. The enzyme catalyses tRNA(Tyr) + L-tyrosine + ATP = L-tyrosyl-tRNA(Tyr) + AMP + diphosphate + H(+). Its function is as follows. Catalyzes the attachment of tyrosine to tRNA(Tyr) in a two-step reaction: tyrosine is first activated by ATP to form Tyr-AMP and then transferred to the acceptor end of tRNA(Tyr). This chain is Tyrosine--tRNA ligase, found in Bacillus velezensis (strain DSM 23117 / BGSC 10A6 / LMG 26770 / FZB42) (Bacillus amyloliquefaciens subsp. plantarum).